The sequence spans 873 residues: Potassium voltage-gated channel subfamily KQT member 3 (873 aa).

Residues 1–41 form a disordered region; it reads MGLKARRAAGAAGGGGGEGGGGGGGAANPAGGDSAVAGDEE. Topologically, residues 1-121 are cytoplasmic; sequence MGLKARRAAG…IYDALERPRG (121 aa). Residues 11–26 are compositionally biased toward gly residues; the sequence is AAGGGGGEGGGGGGGA. T82 carries the phosphothreonine modification. The chain crosses the membrane as a helical span at residues 122–144; it reads WALLYHALVFLIVLGCLILAVLT. Topologically, residues 145–154 are extracellular; the sequence is TFKEYETVSG. The helical transmembrane segment at 155–176 threads the bilayer; it reads DWLLLLETFAIFIFGAEFALRI. Topologically, residues 177-194 are cytoplasmic; sequence WAAGCCCRYKGWRGRLKF. The chain crosses the membrane as a helical span at residues 195 to 214; the sequence is ARKPLCMLDIFVLIASVPVV. Residues 215-226 lie on the Extracellular side of the membrane; sequence AVGNQGNVLATS. Residues 227-245 form a helical; Voltage-sensor membrane-spanning segment; sequence LRSLRFLQILRMLRMDRRG. R244 contacts a 1,2-diacyl-sn-glycero-3-phospho-(1D-myo-inositol-4,5-bisphosphate). The Cytoplasmic segment spans residues 246–257; that stretch reads GTWKLLGSAICA. A helical transmembrane segment spans residues 258 to 283; the sequence is HSKELITAWYIGFLTLILSSFLVYLV. K260 is a binding site for a 1,2-diacyl-sn-glycero-3-phospho-(1D-myo-inositol-4,5-bisphosphate). Residues 284–303 lie on the Extracellular side of the membrane; it reads EKDVPEMDAQGEEMKEEFET. An intramembrane region (pore-forming) is located at residues 304-316; it reads YADALWWGLITLA. The Selectivity filter motif lies at 317-322; that stretch reads TIGYGD. The Extracellular segment spans residues 317–327; sequence TIGYGDKTPKT. The chain crosses the membrane as a helical span at residues 328–354; it reads WEGRLIAATFSLIGVSFFALPAGILGS. Residues 355 to 873 lie on the Cytoplasmic side of the membrane; the sequence is GLALKVQEQH…SIWTPSNKPT (519 aa). The segment at 357–538 is mediates interaction with calmodulin; that stretch reads ALKVQEQHRQ…RLYKKKFKET (182 aa). Residue K367 coordinates a 1,2-diacyl-sn-glycero-3-phospho-(1D-myo-inositol-4,5-bisphosphate). Disordered stretches follow at residues 575–603, 723–742, and 766–873; these read PGPP…PRNE, RGGP…GSTY, and ELQG…NKPT. Composition is skewed to polar residues over residues 588 to 601, 725 to 741, and 844 to 873; these read KGSA…QSPR, GPSS…SGST, and DPFT…NKPT.

It belongs to the potassium channel family. KQT (TC 1.A.1.15) subfamily. Kv7.3/KCNQ3 sub-subfamily. In terms of assembly, heterotetramer with KCNQ2; forms heterotetrameric M-channel responsible for the native M-current. Interacts with calmodulin; the interaction is calcium-independent, constitutive and participates in the proper assembly of a functional M-channel. Heteromultimer with KCNQ5. May associate with KCNE2. Interacts with IQCJ-SCHIP1. Interacts (via the pore module) with SLC5A3/SMIT1; forms a coregulatory complex that alters ion selectivity, voltage dependence and gating kinetics of the channel. In terms of processing, KCNQ2/KCNQ3 are ubiquitinated by NEDD4L. Ubiquitination leads to protein degradation. Degradation induced by NEDD4L is inhibited by USP36. As to expression, expressed in brain and sympathetic ganglia. In brain, expressed in cortex, hippocampus and at much lower levels in cerebellum. In sympathetic ganglia, expressed at approximately equal levels in both superior cervical ganglia and prevertebral ganglia.

It localises to the cell membrane. It catalyses the reaction K(+)(in) = K(+)(out). The catalysed reaction is Rb(+)(in) = Rb(+)(out). The enzyme catalyses Cs(+)(in) = Cs(+)(out). It carries out the reaction Na(+)(in) = Na(+)(out). With respect to regulation, phosphatidylinositol-4,5-bisphosphate (PIP2) potentiates the activation of KCNQ channels by enhancing the electro-mechanical coupling of the voltage-sensing domain (VSD) and the pore-forming domain (PD). In the closed state of the channel, PIP2 is anchored at the S2-S3 loop; upon channel activation, PIP2 interacts with the S4-S5 linker and is involved in channel gating. Calcium suppresses KCNQ2-KCNQ3 channel currents, with calcium-bound calmodulin inducing a change in channel configuration which leads to the reduction of channel affinity for PIP2 and subsequent current suppression. M-channel is blocked by XE991. Pore-forming subunit of the voltage-gated potassium (Kv) M-channel which is responsible for the M-current, a key controller of neuronal excitability. M-channel is composed of pore-forming subunits KCNQ2 and KCNQ3 assembled as heterotetramers, each subunit containing a voltage sensing domain (VSD) and a pore-forming domain (PD). The native M-current has a slowly activating and deactivating potassium conductance which plays a critical role in determining the subthreshold electrical excitability of neurons as well as the responsiveness to synaptic inputs. M-channel is selectively permeable in vitro to other cations besides potassium, in decreasing order of affinity K(+) &gt; Rb(+) &gt; Cs(+) &gt; Na(+). M-channel association with SLC5A3/SMIT1 alters channel ion selectivity, increasing Na(+) and Cs(+) permeation relative to K(+). Suppressed by activation of M1 muscarinic acetylcholine receptors. KCNQ3 also associates with KCNQ5 to form a functional channel in vitro and may also contribute to the M-current in brain. The sequence is that of Potassium voltage-gated channel subfamily KQT member 3 from Rattus norvegicus (Rat).